The primary structure comprises 981 residues: Transcription factor TAC1 (981 aa).

Residues 1–29 (MDTSSSSGTHPSTFNNLTKQQELTGNDPN) show a composition bias toward polar residues. Residues 1–33 (MDTSSSSGTHPSTFNNLTKQQELTGNDPNDTNR) form a disordered region. The segment at residues 40 to 68 (CDSCRRKKIKCNGSYPCGNCIQAKNTSNC) is a DNA-binding region (zn(2)-C6 fungal-type). Disordered stretches follow at residues 74–106 (PVRK…TFSG), 165–199 (HSNS…TSHS), and 868–902 (LRDN…SNST). The segment covering 165–177 (HSNSSMFNNNSLS) has biased composition (low complexity). Over residues 868 to 880 (LRDNSTNHGQNNM) the composition is skewed to polar residues. Low complexity predominate over residues 881-902 (NPSPTITNNTYNSNINTGSNST).

Post-translationally, phosphorylated. Phosphorylation leads to hyperactivation.

Its subcellular location is the nucleus. Drugs such as farnesol and 1-dodecanol are able to hyperactivate TAC1 probably via phosphorylation by the Mediator complex. Functionally, transcriptional activator of drug-responsive genes including the ABC-type transporters CDR1 and CDR2, as well as HSP12 and RTA3. Binds the cis-acting regulatory drug-responsive elements (DREs) with the consensus sequence 5'-CGGAWATCGGATATTTTTTT-3' in the promoters of target genes. This Candida albicans (strain SC5314 / ATCC MYA-2876) (Yeast) protein is Transcription factor TAC1.